Consider the following 83-residue polypeptide: Exodeoxyribonuclease 7 small subunit (83 aa).

This sequence belongs to the XseB family. In terms of assembly, heterooligomer composed of large and small subunits.

Its subcellular location is the cytoplasm. The enzyme catalyses Exonucleolytic cleavage in either 5'- to 3'- or 3'- to 5'-direction to yield nucleoside 5'-phosphates.. Bidirectionally degrades single-stranded DNA into large acid-insoluble oligonucleotides, which are then degraded further into small acid-soluble oligonucleotides. The sequence is that of Exodeoxyribonuclease 7 small subunit from Nitrobacter winogradskyi (strain ATCC 25391 / DSM 10237 / CIP 104748 / NCIMB 11846 / Nb-255).